The chain runs to 167 residues: MNNETSGKETASAPLCSPKLPVEKVQRIAKNDPEYMDTSDDAFVATAFATEFFVQVLTHESLHRQQQQQQQQVPPLPDELTLSYDDISAAIVHSSDGHLQFLNDVIPTTKNLRLLVEENRVRYTTSVMPPNEVYSAYVVNDTAPKPNIVEIDLDNDEDDDEDVTDQE.

Residue serine 17 is modified to Phosphoserine.

In terms of assembly, component of the ISW2 complex, which at least consists of ISW2, ITC1, DLS1 and DPB4.

It localises to the nucleus. Its function is as follows. Functions as a component of the ISW2 complex, which acts in remodeling the chromatin by catalyzing an ATP-dependent alteration in the structure of nucleosomal DNA. The ISW2 complex is involved in coordinating transcriptional repression and in inheritance of telomeric silencing. It is involved in repression of MAT a-specific genes, INO1, and early meiotic genes during mitotic growth dependent upon transcription factor UME6 and in a parallel pathway to the RPD3-SIN3 histone deacetylase complex. DLS1 is partially required for the ISW2 complex chromatin remodeling activity and is not required for its interaction with chromatin. This Saccharomyces cerevisiae (strain ATCC 204508 / S288c) (Baker's yeast) protein is Protein DLS1 (DLS1).